We begin with the raw amino-acid sequence, 140 residues long: Arsenate-mycothiol transferase ArsC1 (140 aa).

The protein belongs to the low molecular weight phosphotyrosine protein phosphatase family.

It localises to the cytoplasm. The enzyme catalyses mycothiol + arsenate = arseno-mycothiol + H2O. In terms of biological role, involved in defense against toxic arsenate. Involved in the mycothiol/myoredoxin redox pathway which uses a mycothioltransferase mechanism; facilitates adduct formation between arsenate and mycothiol. The protein is Arsenate-mycothiol transferase ArsC1 (arsC1) of Corynebacterium glutamicum (strain ATCC 13032 / K051).